Here is a 74-residue protein sequence, read N- to C-terminus: MNRLIILVVAAVFLGMASAEEDVLKRGFPCRCDSDGPSVHGNPLSGTIWVTSCATGWHKCNSENELFHECCKQG.

The signal sequence occupies residues 1–19; sequence MNRLIILVVAAVFLGMASA. Positions 20–24 are excised as a propeptide; sequence EEDVL. Pro-29 is modified (hydroxyproline). Intrachain disulfides connect Cys-30–Cys-70, Cys-32–Cys-60, and Cys-53–Cys-71. A Glutamine amide modification is found at Gln-73.

The protein belongs to the sea anemone sodium channel inhibitory toxin family. Type I subfamily.

The protein localises to the secreted. The protein resides in the nematocyst. In terms of biological role, inhibits voltage-gated sodium channels (Nav). The polypeptide is Delta-actitoxin-Amc3a (Antheopsis maculata (Sea anemone)).